Reading from the N-terminus, the 270-residue chain is Protein-ADP-ribose hydrolase (270 aa).

A Macro domain is found at V73–N267. Positions 92, 93, and 106 each coordinate ADP-D-ribose. Residues C112, H117, and C119 each coordinate Zn(2+). ADP-D-ribose contacts are provided by C119, I120, D121, S212, T213, G214, E215, and F216.

It belongs to the MacroD-type family. Zn-Macro subfamily. It depends on Zn(2+) as a cofactor.

It catalyses the reaction 4-O-(ADP-D-ribosyl)-L-aspartyl-[protein] + H2O = L-aspartyl-[protein] + ADP-D-ribose + H(+). Functionally, ADP-ribosylhydrolase that specifically reverses the SirTM-mediated mono-ADP-ribosylation at an asparatate residue of GcvH-L, by releasing ADP-ribose from the target protein. May play a role in the regulation of the response to host-induced oxidative stress. The protein is Protein-ADP-ribose hydrolase of Streptococcus pyogenes serotype M1.